Consider the following 287-residue polypeptide: 2-dehydro-3-deoxyphosphooctonate aldolase (287 aa).

The protein belongs to the KdsA family.

The protein resides in the cytoplasm. The catalysed reaction is D-arabinose 5-phosphate + phosphoenolpyruvate + H2O = 3-deoxy-alpha-D-manno-2-octulosonate-8-phosphate + phosphate. It functions in the pathway carbohydrate biosynthesis; 3-deoxy-D-manno-octulosonate biosynthesis; 3-deoxy-D-manno-octulosonate from D-ribulose 5-phosphate: step 2/3. The protein operates within bacterial outer membrane biogenesis; lipopolysaccharide biosynthesis. This Leptospira interrogans serogroup Icterohaemorrhagiae serovar copenhageni (strain Fiocruz L1-130) protein is 2-dehydro-3-deoxyphosphooctonate aldolase.